The chain runs to 79 residues: Cell division protein ZapB (79 aa).

Residues 4–78 are a coiled coil; it reads EVFEKLEAKV…LRALLGKMEE (75 aa).

Belongs to the ZapB family. In terms of assembly, homodimer. The ends of the coiled-coil dimer bind to each other, forming polymers. Interacts with FtsZ.

The protein resides in the cytoplasm. Its function is as follows. Non-essential, abundant cell division factor that is required for proper Z-ring formation. It is recruited early to the divisome by direct interaction with FtsZ, stimulating Z-ring assembly and thereby promoting cell division earlier in the cell cycle. Its recruitment to the Z-ring requires functional FtsA or ZipA. The protein is Cell division protein ZapB of Erwinia tasmaniensis (strain DSM 17950 / CFBP 7177 / CIP 109463 / NCPPB 4357 / Et1/99).